The chain runs to 133 residues: MHEYSIACEIFEQVIETAKVHGALEVRHVTLEMGRLSHTNPEQLSFCFKAIAEGSIAENAEFIVETIPPSLECECGYTGTVDETQIGKNDELQSELLEYIAALECPVCGKNARIIGGRELIVKSIEIETEVEQ.

A Ni(2+)-binding site is contributed by His-2. Zn(2+) is bound by residues Cys-73, Cys-75, Cys-105, and Cys-108.

The protein belongs to the HypA/HybF family.

In terms of biological role, involved in the maturation of [NiFe] hydrogenases. Required for nickel insertion into the metal center of the hydrogenase. The polypeptide is Hydrogenase maturation factor HypA (Methanosarcina acetivorans (strain ATCC 35395 / DSM 2834 / JCM 12185 / C2A)).